We begin with the raw amino-acid sequence, 474 residues long: Ribulose bisphosphate carboxylase/oxygenase activase, chloroplastic (474 aa).

The transit peptide at 1-58 (MAAAVSTVGAINRAPLSLNGSGSGAVSAPASTFLGKKVVTVSRFAQSNKKSNGSFKVL) directs the protein to the chloroplast. Residue Thr78 is modified to Phosphothreonine; by CK2. 165-172 (GGKGQGKS) contacts ATP. Thr283 is modified (phosphothreonine).

This sequence belongs to the RuBisCO activase family. Phosphorylated at Thr-78 by CK2.

The protein resides in the plastid. Its subcellular location is the chloroplast stroma. It localises to the chloroplast. It is found in the plastoglobule. Functionally, activation of RuBisCO (ribulose-1,5-bisphosphate carboxylase/oxygenase; EC 4.1.1.39) involves the ATP-dependent carboxylation of the epsilon-amino group of lysine leading to a carbamate structure. The chain is Ribulose bisphosphate carboxylase/oxygenase activase, chloroplastic (RCA) from Arabidopsis thaliana (Mouse-ear cress).